Consider the following 134-residue polypeptide: Small ribosomal subunit protein bS16 (134 aa).

A disordered region spans residues 105–134 (QNERREKRLAIKTRRRQAKKAAEAEGQESA). Over residues 114–123 (AIKTRRRQAK) the composition is skewed to basic residues.

The protein belongs to the bacterial ribosomal protein bS16 family.

The sequence is that of Small ribosomal subunit protein bS16 from Chlorobium phaeobacteroides (strain BS1).